The chain runs to 165 residues: Lipoprotein signal peptidase (165 aa).

The next 3 membrane-spanning stretches (helical) occupy residues Ser9–Val29, Trp65–Leu85, and Ala100–Val120. Residues Asp121 and Asp139 contribute to the active site. Residues Val134–Phe154 traverse the membrane as a helical segment.

This sequence belongs to the peptidase A8 family.

It localises to the cell inner membrane. The catalysed reaction is Release of signal peptides from bacterial membrane prolipoproteins. Hydrolyzes -Xaa-Yaa-Zaa-|-(S,diacylglyceryl)Cys-, in which Xaa is hydrophobic (preferably Leu), and Yaa (Ala or Ser) and Zaa (Gly or Ala) have small, neutral side chains.. It participates in protein modification; lipoprotein biosynthesis (signal peptide cleavage). Functionally, this protein specifically catalyzes the removal of signal peptides from prolipoproteins. This Pasteurella multocida (strain Pm70) protein is Lipoprotein signal peptidase.